We begin with the raw amino-acid sequence, 403 residues long: D-alanyl-D-alanine carboxypeptidase DacA (403 aa).

A signal peptide spans 1-29 (MNTIFSARIMKRLALTTALCTAFISAAHA). Ser73 (acyl-ester intermediate) is an active-site residue. The active-site Proton acceptor is the Lys76. Residue Ser139 is part of the active site. Lys242 contributes to the substrate binding site.

It belongs to the peptidase S11 family.

Its subcellular location is the cell inner membrane. The enzyme catalyses Preferential cleavage: (Ac)2-L-Lys-D-Ala-|-D-Ala. Also transpeptidation of peptidyl-alanyl moieties that are N-acyl substituents of D-alanine.. It participates in cell wall biogenesis; peptidoglycan biosynthesis. In terms of biological role, removes C-terminal D-alanyl residues from sugar-peptide cell wall precursors. The polypeptide is D-alanyl-D-alanine carboxypeptidase DacA (dacA) (Escherichia coli O157:H7).